The following is a 507-amino-acid chain: ATP synthase subunit alpha, plastid (507 aa).

Residue 170–177 (GDRQTGKT) coordinates ATP.

The protein belongs to the ATPase alpha/beta chains family. In terms of assembly, F-type ATPases have 2 components, CF(1) - the catalytic core - and CF(0) - the membrane proton channel. CF(1) has five subunits: alpha(3), beta(3), gamma(1), delta(1), epsilon(1). CF(0) has four main subunits: a, b, b' and c.

Its subcellular location is the plastid membrane. The enzyme catalyses ATP + H2O + 4 H(+)(in) = ADP + phosphate + 5 H(+)(out). Produces ATP from ADP in the presence of a proton gradient across the membrane. The alpha chain is a regulatory subunit. The polypeptide is ATP synthase subunit alpha, plastid (Cuscuta obtusiflora (Peruvian dodder)).